A 549-amino-acid polypeptide reads, in one-letter code: Oxygen-dependent choline dehydrogenase (549 aa).

4-33 contacts FAD; it reads DFVIIGSGSAGSALAYRLSEGGKNSVIVIE. His465 (proton acceptor) is an active-site residue.

Belongs to the GMC oxidoreductase family. FAD serves as cofactor.

The catalysed reaction is choline + A = betaine aldehyde + AH2. It catalyses the reaction betaine aldehyde + NAD(+) + H2O = glycine betaine + NADH + 2 H(+). Its pathway is amine and polyamine biosynthesis; betaine biosynthesis via choline pathway; betaine aldehyde from choline (cytochrome c reductase route): step 1/1. Functionally, involved in the biosynthesis of the osmoprotectant glycine betaine. Catalyzes the oxidation of choline to betaine aldehyde and betaine aldehyde to glycine betaine at the same rate. The sequence is that of Oxygen-dependent choline dehydrogenase from Rhizobium johnstonii (strain DSM 114642 / LMG 32736 / 3841) (Rhizobium leguminosarum bv. viciae).